The sequence spans 59 residues: UPF0434 protein Sbal_1685 (59 aa).

Belongs to the UPF0434 family.

The sequence is that of UPF0434 protein Sbal_1685 from Shewanella baltica (strain OS155 / ATCC BAA-1091).